The chain runs to 206 residues: Histidine biosynthesis bifunctional protein HisIE (206 aa).

A phosphoribosyl-AMP cyclohydrolase region spans residues 1 to 117; that stretch reads MCNEPATSDV…SCFPAAPGQF (117 aa). A phosphoribosyl-ATP pyrophosphohydrolase region spans residues 118–206; the sequence is LGALDALVAE…AVTVLEARHR (89 aa).

This sequence in the N-terminal section; belongs to the PRA-CH family. It in the C-terminal section; belongs to the PRA-PH family.

It is found in the cytoplasm. The catalysed reaction is 1-(5-phospho-beta-D-ribosyl)-ATP + H2O = 1-(5-phospho-beta-D-ribosyl)-5'-AMP + diphosphate + H(+). The enzyme catalyses 1-(5-phospho-beta-D-ribosyl)-5'-AMP + H2O = 1-(5-phospho-beta-D-ribosyl)-5-[(5-phospho-beta-D-ribosylamino)methylideneamino]imidazole-4-carboxamide. The protein operates within amino-acid biosynthesis; L-histidine biosynthesis; L-histidine from 5-phospho-alpha-D-ribose 1-diphosphate: step 2/9. It participates in amino-acid biosynthesis; L-histidine biosynthesis; L-histidine from 5-phospho-alpha-D-ribose 1-diphosphate: step 3/9. The protein is Histidine biosynthesis bifunctional protein HisIE (hisI) of Xylella fastidiosa (strain Temecula1 / ATCC 700964).